The following is a 610-amino-acid chain: DNA mismatch repair protein MutL (610 aa).

Belongs to the DNA mismatch repair MutL/HexB family.

Its function is as follows. This protein is involved in the repair of mismatches in DNA. It is required for dam-dependent methyl-directed DNA mismatch repair. May act as a 'molecular matchmaker', a protein that promotes the formation of a stable complex between two or more DNA-binding proteins in an ATP-dependent manner without itself being part of a final effector complex. The protein is DNA mismatch repair protein MutL of Rickettsia conorii (strain ATCC VR-613 / Malish 7).